A 103-amino-acid polypeptide reads, in one-letter code: Small ribosomal subunit protein uS10 (103 aa).

The protein belongs to the universal ribosomal protein uS10 family. In terms of assembly, part of the 30S ribosomal subunit.

Involved in the binding of tRNA to the ribosomes. The polypeptide is Small ribosomal subunit protein uS10 (Idiomarina loihiensis (strain ATCC BAA-735 / DSM 15497 / L2-TR)).